The following is a 327-amino-acid chain: Delta(3,5)-Delta(2,4)-dienoyl-CoA isomerase, mitochondrial (327 aa).

A mitochondrion-targeting transit peptide spans 1–33; the sequence is MATAMTVSSKLLGLLMQQLRGTRQLYFNVSLRS. Residues 115 to 119 and glycine 173 each bind substrate; that span reads SGIDL. An N6-succinyllysine modification is found at lysine 230. Phosphoserine is present on serine 267. Lysine 316 carries the post-translational modification N6-succinyllysine. The short motif at 325 to 327 is the Microbody targeting signal element; sequence SKL. At lysine 326 the chain carries N6-acetyllysine.

This sequence belongs to the enoyl-CoA hydratase/isomerase family. Homohexamer. In terms of tissue distribution, expressed in heart and liver (at protein level).

It localises to the mitochondrion. The protein resides in the peroxisome. The enzyme catalyses (3E,5Z)-octadienoyl-CoA = (2E,4E)-octadienoyl-CoA. It catalyses the reaction (3E,5Z,8Z,11Z,14Z)-eicosapentaenoyl-CoA = (2E,4E,8Z,11Z,14Z)-eicosapentaenoyl-CoA. It participates in lipid metabolism; fatty acid beta-oxidation. Isomerization of 3-trans,5-cis-dienoyl-CoA to 2-trans,4-trans-dienoyl-CoA. The sequence is that of Delta(3,5)-Delta(2,4)-dienoyl-CoA isomerase, mitochondrial from Rattus norvegicus (Rat).